Consider the following 370-residue polypeptide: Gap junction delta-4 protein (370 aa).

At 1–19 (MEGVDLLGFLIITLNCNVT) the chain is on the cytoplasmic side. A helical membrane pass occupies residues 20–40 (MXGKLWFVLTMLLRMLVIVLA). Residues 41–76 (GRPVYQDEQERFVCNTLQPGCANVCYDVFSPVSHLR) are Extracellular-facing. A helical membrane pass occupies residues 77-97 (FWLIQGVCVLLPSAVFSVYVL). Over 98–146 (HRGATLAALGPRRCPEPRDTASGQRRCPGSCRERGGLEVPDFSAGYIIH) the chain is Cytoplasmic. Residues 147–167 (LLLRTLLEAAFGALNYLLFGF) form a helical membrane-spanning segment. Residues 168–196 (LAPNKFPCTRPPCTGVVDCYVSRPTEKSL) lie on the Extracellular side of the membrane. Residues 197–217 (LMLFLWAVSALSFLLGLADLV) traverse the membrane as a helical segment. The Cytoplasmic segment spans residues 218–370 (CSLRRLMRRR…HLRARKSEWV (153 aa)). Residues 227–370 (RPGPPTSPSI…HLRARKSEWV (144 aa)) are disordered. The segment covering 246–260 (PEGRPTDKEGGREQE) has biased composition (basic and acidic residues). Positions 331-345 (PSAAPSHLAAHPSCS) are enriched in low complexity.

It belongs to the connexin family. Delta-type subfamily. As to quaternary structure, a connexon is composed of a hexamer of connexins.

It localises to the cell membrane. The protein resides in the cell junction. The protein localises to the gap junction. One gap junction consists of a cluster of closely packed pairs of transmembrane channels, the connexons, through which materials of low MW diffuse from one cell to a neighboring cell. The chain is Gap junction delta-4 protein (GJD4) from Macaca fascicularis (Crab-eating macaque).